Here is a 41-residue protein sequence, read N- to C-terminus: Photosystem I reaction center subunit IX (41 aa).

A helical transmembrane segment spans residues 7–27; sequence YLSTAPVVAAAWFTFTAGLLI.

It belongs to the PsaJ family.

Its subcellular location is the plastid. The protein localises to the chloroplast thylakoid membrane. In terms of biological role, may help in the organization of the PsaE and PsaF subunits. This Oltmannsiellopsis viridis (Marine flagellate) protein is Photosystem I reaction center subunit IX.